A 141-amino-acid polypeptide reads, in one-letter code: Elongation factor G, chloroplastic (141 aa).

The 130-residue stretch at 12-141 (KDYRNIGIMA…VPRICFVNKM (130 aa)) folds into the tr-type G domain. GTP-binding positions include 21-28 (AHIDAGKT) and 85-89 (DTPGH).

This sequence belongs to the TRAFAC class translation factor GTPase superfamily. Classic translation factor GTPase family. EF-G/EF-2 subfamily.

The protein localises to the plastid. Its subcellular location is the chloroplast. Its pathway is protein biosynthesis; polypeptide chain elongation. Functionally, chloroplast-localized elongation factor EF-G involved in protein synthesis in plastids. Catalyzes the GTP-dependent ribosomal translocation step during translation elongation. During this step, the ribosome changes from the pre-translocational (PRE) to the post-translocational (POST) state as the newly formed A-site-bound peptidyl-tRNA and P-site-bound deacylated tRNA move to the P and E sites, respectively. Catalyzes the coordinated movement of the two tRNA molecules, the mRNA and conformational changes in the ribosome. This is Elongation factor G, chloroplastic (fusA) from Pisum sativum (Garden pea).